The sequence spans 1114 residues: MFASYLLLVLWIIRLVPTTHAHTGNDAEYLLNTVLKRDATSLSRNAYLDSEATSGATNYCSDCDNDEVIVTVDGTSTIWTILLDSTISTLVTTTSTEKTTLTSCGQSCTKSKDASSVSSSSASSSTSRSLIFRTSTKTVTDTTTLPTVTEINTFTTTDSHIVLVYTDINSESTITGDYTFIKNKNTRTVIITDYVTSTVGGETQIVTQTTTSVVYELVVTCPDHDFATTLTGSETFVPPTTAPKPVETPSPEPSTTILSIKSESSVPSATTSVLDTSITLETSSSSIEFSTSTQESSSIGPSSSSSIGSCTSSSISTEESLSTTKLSSSFTSISSWEELSSSFTQSTTSSNAEPSSSFAESFTTESLSSTIEATSSMEDISNNSVLTSSIFSETTTNESSSYTDEPSSSEEITNTYEPSSSTESSTTDQFSSLLSSSLPVTSTSSTTISSATPITTVLSTSITSQDTNCEATITNISTNTLIETITVNGNTTIYTETQLSTYLTSNTSINCPNTNSATTTTTQVIPTATTEQIHTTTLNGSIIVSTETATLKTTVIITHCPECTNESSTSEYSSSLKAESSQQSIPTIESNLSELSVSSTLSLVESTASGKCSGLTTTTFTSIVSTTTESIYTITSNESTFEMTTTVTNIGTIVITTCPTITPVSSSYSSSESLSSSVSTSLLTESNSTISQSTVSTDKSSLTNDNQISTVSTETPLTSITIIETTSKTTESLYTTTSNDSTHIFTTTIIDVQTNTIVTCPTTTSTLTSSHTSDNEKPASLSSSSLIESDHIADGTTTSTTFQSTSTTTVDHHCSSCSEILLSTSSSIIGNKSTSTSISSIETSASSSYHSSEPEVMSSSSSTSIKQSSDSIPSTSQTHVSTTSSSVSSLETTTTTTENSPTSNGFSSSSIVTSVNVPDYVSSSVSSTSSTTSSPSTESSSNGLVSTVTESSTANENTSEITTIDNTSITSEKVTGTNSNPKTSEIIKDATITTSGNVESLHSTTPISSTSIISTNAISSSDTTTLTITNTLTYSIDSITTMKTSSITTAPPPPQQKESSSVLSSSLIINSSTPTIIPTINIPITFEGNANSLGLKNGDNSWIIGIMMIGLLMI.

A signal peptide spans 1–21 (MFASYLLLVLWIIRLVPTTHA). Disordered stretches follow at residues 232–256 (GSET…PSTT) and 284–314 (SSSI…TSSS). The segment covering 240–252 (TTAPKPVETPSPE) has biased composition (pro residues). N-linked (GlcNAc...) asparagine glycans are attached at residues asparagine 382, asparagine 397, asparagine 475, asparagine 490, asparagine 506, asparagine 539, asparagine 565, asparagine 591, asparagine 637, asparagine 687, and asparagine 739. A disordered region spans residues 392 to 430 (SETTTNESSSYTDEPSSSEEITNTYEPSSSTESSTTDQF). Residues 764 to 784 (TSTLTSSHTSDNEKPASLSSS) are disordered. Asparagine 831 carries N-linked (GlcNAc...) asparagine glycosylation. Low complexity-rich tracts occupy residues 844–910 (SASS…SSSS) and 922–941 (SSSV…ESSS). The segment at 844-963 (SASSSYHSSE…ANENTSEITT (120 aa)) is disordered. Polar residues predominate over residues 942-963 (NGLVSTVTESSTANENTSEITT). N-linked (GlcNAc...) asparagine glycosylation is found at asparagine 957, asparagine 966, and asparagine 1070. A lipid anchor (GPI-anchor amidated asparagine) is attached at asparagine 1089. Positions 1090–1114 (ANSLGLKNGDNSWIIGIMMIGLLMI) are cleaved as a propeptide — removed in mature form.

The protein resides in the cell membrane. Putative adhesin which may be involved in cell adhesion and virulence. Involved in the regulation of filamentous growth. The protein is Filamentous growth regulator 23 (FGR23) of Candida albicans (strain SC5314 / ATCC MYA-2876) (Yeast).